We begin with the raw amino-acid sequence, 610 residues long: Mitochondrial import receptor subunit TOM70 (610 aa).

Ala-2 is modified (N-acetylalanine). Residues 2–41 are Mitochondrial intermembrane-facing; the sequence is AASKPVEAAMAAAAAPASGNGVGSSGGTAAPGSGAGTLPR. A helical membrane pass occupies residues 42–62; that stretch reads WHVALAIGAPLLLGAGAMYLW. The Cytoplasmic portion of the chain corresponds to 63 to 610; the sequence is SRRRRRREAG…KKYGLKPPTL (548 aa). Positions 69–109 are disordered; sequence REAGGRGDASGLKRNSERKTPEGRASPALGSGPDGSGDSLE. Residue Arg-74 is modified to Omega-N-methylarginine. A compositionally biased stretch (low complexity) spans 93-108; the sequence is ASPALGSGPDGSGDSL. Ser-94, Ser-99, Ser-104, Ser-107, and Ser-112 each carry phosphoserine. TPR repeat units lie at residues 116–149 and 155–188; these read AQAAKNKGNKYFKAGKYEQAIQCYTEAISLCPTE and STFYQNRAAAFEQLQKWKEVAQDCTKAVELNPKY. Lys-187 is modified (N6-acetyllysine). A Glycyl lysine isopeptide (Lys-Gly) (interchain with G-Cter in SUMO2) cross-link involves residue Lys-277. TPR repeat units lie at residues 296–329, 331–364, 369–402, 403–436, 444–477, 478–511, 513–546, and 547–580; these read ENSGYLKAKQYMEEENYDKIISECSKEIDAQGKY, AEALLLRATFYLLIGSANAAKPDLDKVISLKEAN, ANALIKRGTMCMQQQQPMLSTQDFNMAAEIDPMN, SDVYHHRGQLKILLDLVEEAVADFDACIRLRPKF, CFALYRQAYTANNSSQVQAAMKGFEEVIKKFPRC, AEGYALYAQALTDQQQFGKADEMYDKCIDLEPDN, TTYVHKGLLQLQWKQDLDKGLELISKAIEIDNKC, and DFAYETMGTIEVQRGNMEKAIDMFNKAINLAKSE.

It belongs to the Tom70 family. As to quaternary structure, forms part of the preprotein translocase complex of the outer mitochondrial membrane (TOM complex) which consists of at least 7 different proteins (TOMM5, TOMM6, TOMM7, TOMM20, TOMM22, TOMM40 and TOMM70). Interacts with CAPN8. Interacts with TRADD, TRAF6 and STING. Interacts with MAVS. Interacts with HSPA8 and HSP90AA1; both interactions are required for preprotein mitochondrial import. The interaction with HSP90AA1 is direct and mediates the association of TOMM70 with IRF3 and TBK1. Upon mitochondrial depolarization, interacts with PINK1; the interaction is required for PINK1-TOM-TIM23 supercomplex formation which is critical for PINK1 stabilization at the outer mitochondrial membrane, kinase activation and downstream mitophagy.

Its subcellular location is the mitochondrion outer membrane. Acts as a receptor of the preprotein translocase complex of the outer mitochondrial membrane (TOM complex). Recognizes and mediates the translocation of mitochondrial preproteins from the cytosol into the mitochondria in a chaperone dependent manner. Mediates TBK1 and IRF3 activation induced by MAVS in response to Sendai virus infection and promotes host antiviral responses during virus infection. The sequence is that of Mitochondrial import receptor subunit TOM70 from Rattus norvegicus (Rat).